The primary structure comprises 340 residues: Sulfotransferase 2B1 (340 aa).

67–72 is a binding site for 3'-phosphoadenylyl sulfate; it reads KSGTNW. Substrate-binding residues include W95 and W100. Residue H122 is the Proton acceptor of the active site. Residues R144, S152, Y207, 241-246, and 271-273 each bind 3'-phosphoadenylyl sulfate; these read SAFAAM and RKG. A disordered region spans residues 301–340; the sequence is LPSFPWDRSAEDGSPDGETEPSPSPSPGLASDDPNPGSSQ.

This sequence belongs to the sulfotransferase 1 family. Isoform 1 is expressed in skin and testis. Higher level of isoform 2 expressed in skin and intestine, moderate level in the kidney, low level in liver, stomach and placenta.

The protein localises to the cytoplasm. It is found in the cytosol. It localises to the microsome. The protein resides in the nucleus. The catalysed reaction is an alcohol + 3'-phosphoadenylyl sulfate = an alkyl sulfate + adenosine 3',5'-bisphosphate + H(+). It catalyses the reaction pregnenolone + 3'-phosphoadenylyl sulfate = pregnenolone sulfate + adenosine 3',5'-bisphosphate + H(+). It carries out the reaction 3beta-hydroxyandrost-5-en-17-one + 3'-phosphoadenylyl sulfate = dehydroepiandrosterone 3-sulfate + adenosine 3',5'-bisphosphate + H(+). The enzyme catalyses cholesterol + 3'-phosphoadenylyl sulfate = cholesterol sulfate + adenosine 3',5'-bisphosphate + H(+). Sulfotransferase that utilizes 3'-phospho-5'-adenylyl sulfate (PAPS) as sulfonate donor to catalyze the sulfate conjugation. Sulfonation increases the water solubility of most compounds, and therefore their renal excretion, but it can also result in bioactivation to form active metabolites. Sulfonates cholesterol. Catalyzes sulfation of the 3beta-hydroxyl groups of steroids, such as, pregnenolone and dehydroepiandrosterone (DHEA). Conjugates efficiently cholesterol but has a greater affinity for pregnenolone sulfation. Does not show high activity with DHEA. Plays a role in epidermal cholesterol metabolism and in the regulation of epidermal proliferation and differentiation. Its function is as follows. Prefers pregnenolone over DHEA as a substrate and does not sulfate cholesterol. The chain is Sulfotransferase 2B1 from Rattus norvegicus (Rat).